Consider the following 243-residue polypeptide: Probable phosphatase CLI_3563 (243 aa).

Zn(2+) contacts are provided by H8, H10, H16, H41, E74, H102, H132, D192, and H194.

It belongs to the PHP family. The cofactor is Zn(2+).

The sequence is that of Probable phosphatase CLI_3563 from Clostridium botulinum (strain Langeland / NCTC 10281 / Type F).